Here is a 426-residue protein sequence, read N- to C-terminus: Histidinol dehydrogenase (426 aa).

3 residues coordinate NAD(+): tyrosine 123, glutamine 185, and asparagine 208. The substrate site is built by serine 231, glutamine 253, and histidine 256. 2 residues coordinate Zn(2+): glutamine 253 and histidine 256. Active-site proton acceptor residues include glutamate 321 and histidine 322. Substrate-binding residues include histidine 322, aspartate 355, glutamate 409, and histidine 414. Aspartate 355 provides a ligand contact to Zn(2+). Residue histidine 414 coordinates Zn(2+).

This sequence belongs to the histidinol dehydrogenase family. Requires Zn(2+) as cofactor.

It catalyses the reaction L-histidinol + 2 NAD(+) + H2O = L-histidine + 2 NADH + 3 H(+). The protein operates within amino-acid biosynthesis; L-histidine biosynthesis; L-histidine from 5-phospho-alpha-D-ribose 1-diphosphate: step 9/9. In terms of biological role, catalyzes the sequential NAD-dependent oxidations of L-histidinol to L-histidinaldehyde and then to L-histidine. The polypeptide is Histidinol dehydrogenase (Bacillus licheniformis (strain ATCC 14580 / DSM 13 / JCM 2505 / CCUG 7422 / NBRC 12200 / NCIMB 9375 / NCTC 10341 / NRRL NRS-1264 / Gibson 46)).